A 291-amino-acid polypeptide reads, in one-letter code: Cytosolic Fe-S cluster assembly factor CFD1 (291 aa).

G24–S31 contacts ATP. C199 and C202 together coordinate [4Fe-4S] cluster. Residues E270–Q291 form a disordered region. Residues K276–R285 are compositionally biased toward basic and acidic residues.

This sequence belongs to the Mrp/NBP35 ATP-binding proteins family. NUBP2/CFD1 subfamily. As to quaternary structure, heterotetramer of 2 NBP35 and 2 CFD1 chains. It depends on [4Fe-4S] cluster as a cofactor.

Its subcellular location is the cytoplasm. Component of the cytosolic iron-sulfur (Fe/S) protein assembly (CIA) machinery. Required for maturation of extramitochondrial Fe-S proteins. The NBP35-CFD1 heterotetramer forms a Fe-S scaffold complex, mediating the de novo assembly of an Fe-S cluster and its transfer to target apoproteins. Required for biogenesis and export of both ribosomal subunits, which may reflect a role in assembly of the Fe/S clusters in RLI1, a protein which performs rRNA processing and ribosome export. This chain is Cytosolic Fe-S cluster assembly factor CFD1, found in Yarrowia lipolytica (strain CLIB 122 / E 150) (Yeast).